A 282-amino-acid chain; its full sequence is Bifunctional protein FolD (282 aa).

NADP(+) contacts are provided by residues 165–167 (GRG), Thr192, and Val233.

The protein belongs to the tetrahydrofolate dehydrogenase/cyclohydrolase family. In terms of assembly, homodimer.

It catalyses the reaction (6R)-5,10-methylene-5,6,7,8-tetrahydrofolate + NADP(+) = (6R)-5,10-methenyltetrahydrofolate + NADPH. The catalysed reaction is (6R)-5,10-methenyltetrahydrofolate + H2O = (6R)-10-formyltetrahydrofolate + H(+). Its pathway is one-carbon metabolism; tetrahydrofolate interconversion. In terms of biological role, catalyzes the oxidation of 5,10-methylenetetrahydrofolate to 5,10-methenyltetrahydrofolate and then the hydrolysis of 5,10-methenyltetrahydrofolate to 10-formyltetrahydrofolate. In Mycobacterium leprae (strain Br4923), this protein is Bifunctional protein FolD.